The primary structure comprises 720 residues: Polyribonucleotide nucleotidyltransferase (720 aa).

Residues aspartate 486 and aspartate 492 each contribute to the Mg(2+) site. The KH domain maps to 553 to 612 (PRITVINVPKEKIREVIGTGGKVIREIVEFSGAKIDIEDDGTIKIASTSEESTQKAIDRI). Residues 622 to 690 (GKIYNGKVVK…DRGKVKLSMR (69 aa)) form the S1 motif domain. Positions 698–720 (EDISDKVGPKGGRGGRGEGDLAE) are disordered.

The protein belongs to the polyribonucleotide nucleotidyltransferase family. The cofactor is Mg(2+).

Its subcellular location is the cytoplasm. It catalyses the reaction RNA(n+1) + phosphate = RNA(n) + a ribonucleoside 5'-diphosphate. Its function is as follows. Involved in mRNA degradation. Catalyzes the phosphorolysis of single-stranded polyribonucleotides processively in the 3'- to 5'-direction. The chain is Polyribonucleotide nucleotidyltransferase from Granulibacter bethesdensis (strain ATCC BAA-1260 / CGDNIH1).